The primary structure comprises 372 residues: 3-dehydroquinate synthase (372 aa).

Residues 116–120 (GVVGD), 140–141 (TT), Lys-153, Lys-162, and 180–183 (TLKT) each bind NAD(+). Positions 195, 260, and 277 each coordinate Zn(2+).

This sequence belongs to the sugar phosphate cyclases superfamily. Dehydroquinate synthase family. It depends on NAD(+) as a cofactor. Co(2+) is required as a cofactor. Zn(2+) serves as cofactor.

It localises to the cytoplasm. It carries out the reaction 7-phospho-2-dehydro-3-deoxy-D-arabino-heptonate = 3-dehydroquinate + phosphate. It functions in the pathway metabolic intermediate biosynthesis; chorismate biosynthesis; chorismate from D-erythrose 4-phosphate and phosphoenolpyruvate: step 2/7. Its function is as follows. Catalyzes the conversion of 3-deoxy-D-arabino-heptulosonate 7-phosphate (DAHP) to dehydroquinate (DHQ). This is 3-dehydroquinate synthase from Prochlorococcus marinus (strain MIT 9313).